Consider the following 663-residue polypeptide: Forkhead protein sep1 (663 aa).

The fork-head DNA-binding region spans 128–222 (KPPYSYAMLI…LKLKLRKPGV (95 aa)). 2 disordered regions span residues 220 to 241 (PGVNSRPAPPVQDVTSSTKYGS) and 325 to 387 (SPLQ…DVET). Low complexity predominate over residues 340-355 (SPASSASPSESLRNES). Ser-446 carries the phosphoserine modification.

The protein localises to the nucleus. Required for promoter sequence element PCB-driven, M-phase-specific transcription. Acts as a transcriptional activator with a role in the regulation of mitosis. Regulates septation and the periodic transcription of cdc15. In Schizosaccharomyces pombe (strain 972 / ATCC 24843) (Fission yeast), this protein is Forkhead protein sep1 (sep1).